A 330-amino-acid chain; its full sequence is Tryptophan--tRNA ligase (330 aa).

ATP contacts are provided by residues 10 to 12 (QTT) and 18 to 19 (GN). The 'HIGH' region signature appears at 11–19 (TTGALHLGN). Asp134 is an L-tryptophan binding site. ATP is bound by residues 146 to 148 (GED), Ile186, and 195 to 199 (KMSKS). The short motif at 195-199 (KMSKS) is the 'KMSKS' region element.

The protein belongs to the class-I aminoacyl-tRNA synthetase family. Homodimer.

It is found in the cytoplasm. It catalyses the reaction tRNA(Trp) + L-tryptophan + ATP = L-tryptophyl-tRNA(Trp) + AMP + diphosphate + H(+). Its function is as follows. Catalyzes the attachment of tryptophan to tRNA(Trp). The sequence is that of Tryptophan--tRNA ligase from Rickettsia prowazekii (strain Madrid E).